Reading from the N-terminus, the 656-residue chain is Methylenetetrahydrofolate reductase (NADPH) (656 aa).

The disordered stretch occupies residues Met1–Arg46. A phosphoserine mark is found at Ser10, Ser18, Ser20, Ser21, Ser23, Ser25, Ser26, Ser29, and Ser30. Thr34 is subject to Phosphothreonine. Glu63 (proton donor/acceptor) is an active-site residue. Residues Glu63–Arg68 and Thr94–Trp95 contribute to the NAD(+) site. Residue Thr94 is modified to Phosphothreonine. Thr94–Trp95 is an FAD binding site. Ser103 carries the phosphoserine modification. FAD is bound by residues His127, Arg157–Asp159, Tyr174–Ala175, Tyr197, His201–Ala204, Asp210, and Lys217. Position 159 (Asp159) interacts with substrate. Positions 228, 321, and 325 each coordinate substrate. Ser394 carries the post-translational modification Phosphoserine. The residue at position 451 (Thr451) is a Phosphothreonine. S-adenosyl-L-methionine-binding positions include Asn456, Ala461–Thr464, Thr481–Gln485, Thr560, and Thr573.

The protein belongs to the methylenetetrahydrofolate reductase family. Homodimer. Requires FAD as cofactor. Post-translationally, phosphorylation of an N-terminal serine-rich phosphorylation region increases sensitivity to S-adenosylmethionine and inhibition.

It carries out the reaction (6S)-5-methyl-5,6,7,8-tetrahydrofolate + NADP(+) = (6R)-5,10-methylene-5,6,7,8-tetrahydrofolate + NADPH + H(+). The protein operates within one-carbon metabolism; tetrahydrofolate interconversion. With respect to regulation, allosterically regulated by S-adenosylmethionine (SAM). Its function is as follows. Catalyzes the conversion of 5,10-methylenetetrahydrofolate to 5-methyltetrahydrofolate, a cosubstrate for homocysteine remethylation to methionine. Represents a key regulatory connection between the folate and methionine cycles. The protein is Methylenetetrahydrofolate reductase (NADPH) (MTHFR) of Macaca fascicularis (Crab-eating macaque).